Consider the following 239-residue polypeptide: Probable transcriptional regulatory protein BCAH187_A0615 (239 aa).

It belongs to the TACO1 family. YeeN subfamily.

The protein localises to the cytoplasm. In Bacillus cereus (strain AH187), this protein is Probable transcriptional regulatory protein BCAH187_A0615.